A 163-amino-acid chain; its full sequence is Translation initiation factor IF-3-like (163 aa).

It belongs to the IF-3 family.

This is Translation initiation factor IF-3-like from Nostoc sp. (strain PCC 7120 / SAG 25.82 / UTEX 2576).